Consider the following 465-residue polypeptide: Nuclear pore complex protein NUP50B (465 aa).

Disordered regions lie at residues 1-44 and 59-244; these read MGDS…TFNT and RRTD…FHQH. Gly2 carries the N-acetylglycine modification. Residues 26–35 are compositionally biased toward acidic residues; sequence GLDDDDEDTS. Positions 81-97 are enriched in low complexity; that stretch reads PFTAPAPSTAAAETTKP. Basic and acidic residues-rich tracts occupy residues 105–127, 141–157, and 216–233; these read TLAD…KSDA, ISAK…KEMS, and TEKE…EKNG. Phosphoserine is present on Ser125. A run of 3 repeats spans residues 266 to 267, 286 to 287, and 297 to 298. The interval 266-298 is 3 X 2 AA repeats of F-G; that stretch reads FGLVPQEGSTGSGSEQSSFSFGQANNGNSSLFG. Disordered stretches follow at residues 308 to 330 and 439 to 465; these read KSTE…GEEN and HKDS…AEDA. Thr455 carries the post-translational modification Phosphothreonine. Polar residues predominate over residues 456–465; sequence PENSPSAEDA. Ser459 carries the post-translational modification Phosphoserine.

In terms of assembly, part of the nuclear pore complex (NPC). The NPC has an eight-fold symmetrical structure comprising a central transport channel and two rings, the cytoplasmic and nuclear rings, to which eight filaments are attached. The cytoplasmic filaments have loose ends, while the nuclear filaments are joined in a distal ring, forming a nuclear basket. NPCs are highly dynamic in configuration and composition, and can be devided in 3 subcomplexes, the NUP62 subcomplex, the NUP107-160 subcomplex and the NUP93 subcomplex, containing approximately 30 different nucleoporin proteins.

Its subcellular location is the nucleus. It localises to the nucleoplasm. The protein localises to the nuclear pore complex. Its function is as follows. Probably involved in nucleocytoplasmic transport via its interactions with importins and Ran, rather than by forming part of the nuclear pore complex (NPC) scaffolding. The chain is Nuclear pore complex protein NUP50B from Arabidopsis thaliana (Mouse-ear cress).